A 184-amino-acid polypeptide reads, in one-letter code: Late embryogenesis abundant protein (184 aa).

The tract at residues 49–184 (TGNIAEYPTE…KLPGHHNHHP (136 aa)) is disordered. Over residues 60-86 (PPAGVAAGTGAAATTAAGVTTSETTTG) the composition is skewed to low complexity. Composition is skewed to basic and acidic residues over residues 87-98 (QEHHGSLGEHLR) and 122-138 (KDKI…KDEQ). Over residues 139–159 (TPTTATTTGPTTTTTTTGAAA) the composition is skewed to low complexity. A compositionally biased stretch (basic and acidic residues) spans 160–177 (DQHHEKKGILEKIKEKLP).

The protein belongs to the plant dehydrin family.

Its function is as follows. LEA protein are late embryogenesis abundant in higher plant seed embryos. There are two subsets of LEA proteins (5a, and 5b), the first ones are expressed when the cotyledon weight reach 80 mg and the second set are expressed above 100 mg. The function of those proteins is not known. This is Late embryogenesis abundant protein from Raphanus sativus (Radish).